Consider the following 387-residue polypeptide: Succinyl-diaminopimelate desuccinylase (387 aa).

Position 73 (histidine 73) interacts with Zn(2+). The active site involves aspartate 75. Residue aspartate 106 participates in Zn(2+) binding. Glutamate 141 functions as the Proton acceptor in the catalytic mechanism. Glutamate 142, glutamate 170, and histidine 359 together coordinate Zn(2+).

The protein belongs to the peptidase M20A family. DapE subfamily. In terms of assembly, homodimer. The cofactor is Zn(2+). Co(2+) serves as cofactor.

It catalyses the reaction N-succinyl-(2S,6S)-2,6-diaminopimelate + H2O = (2S,6S)-2,6-diaminopimelate + succinate. The protein operates within amino-acid biosynthesis; L-lysine biosynthesis via DAP pathway; LL-2,6-diaminopimelate from (S)-tetrahydrodipicolinate (succinylase route): step 3/3. Catalyzes the hydrolysis of N-succinyl-L,L-diaminopimelic acid (SDAP), forming succinate and LL-2,6-diaminopimelate (DAP), an intermediate involved in the bacterial biosynthesis of lysine and meso-diaminopimelic acid, an essential component of bacterial cell walls. This chain is Succinyl-diaminopimelate desuccinylase, found in Methylorubrum populi (strain ATCC BAA-705 / NCIMB 13946 / BJ001) (Methylobacterium populi).